The sequence spans 474 residues: Glutamate--tRNA ligase (474 aa).

Positions 11–21 (PSPTGFLHIGG) match the 'HIGH' region motif. Positions 240-244 (KLSKR) match the 'KMSKS' region motif. ATP is bound at residue Lys243.

The protein belongs to the class-I aminoacyl-tRNA synthetase family. Glutamate--tRNA ligase type 1 subfamily. As to quaternary structure, monomer.

Its subcellular location is the cytoplasm. The catalysed reaction is tRNA(Glu) + L-glutamate + ATP = L-glutamyl-tRNA(Glu) + AMP + diphosphate. Catalyzes the attachment of glutamate to tRNA(Glu) in a two-step reaction: glutamate is first activated by ATP to form Glu-AMP and then transferred to the acceptor end of tRNA(Glu). In Nitrobacter winogradskyi (strain ATCC 25391 / DSM 10237 / CIP 104748 / NCIMB 11846 / Nb-255), this protein is Glutamate--tRNA ligase.